A 468-amino-acid chain; its full sequence is ATP synthase subunit beta (468 aa).

Residue 148 to 155 coordinates ATP; it reads GGAGVGKT.

The protein belongs to the ATPase alpha/beta chains family. As to quaternary structure, F-type ATPases have 2 components, CF(1) - the catalytic core - and CF(0) - the membrane proton channel. CF(1) has five subunits: alpha(3), beta(3), gamma(1), delta(1), epsilon(1). CF(0) has three main subunits: a(1), b(2) and c(9-12). The alpha and beta chains form an alternating ring which encloses part of the gamma chain. CF(1) is attached to CF(0) by a central stalk formed by the gamma and epsilon chains, while a peripheral stalk is formed by the delta and b chains.

It localises to the cell inner membrane. It catalyses the reaction ATP + H2O + 4 H(+)(in) = ADP + phosphate + 5 H(+)(out). Functionally, produces ATP from ADP in the presence of a proton gradient across the membrane. The catalytic sites are hosted primarily by the beta subunits. The polypeptide is ATP synthase subunit beta (Xanthomonas oryzae pv. oryzae (strain KACC10331 / KXO85)).